A 240-amino-acid polypeptide reads, in one-letter code: Large ribosomal subunit protein bL25 (240 aa).

Disordered regions lie at residues 1–20 (MAENVLSAQKRTEQGKGPAR) and 220–240 (PAAGAAPAKGGEAKGGDKGKK). Over residues 220–229 (PAAGAAPAKG) the composition is skewed to low complexity. Positions 230–240 (GEAKGGDKGKK) are enriched in basic and acidic residues.

This sequence belongs to the bacterial ribosomal protein bL25 family. CTC subfamily. In terms of assembly, part of the 50S ribosomal subunit; part of the 5S rRNA/L5/L18/L25 subcomplex. Contacts the 5S rRNA. Binds to the 5S rRNA independently of L5 and L18.

Its function is as follows. This is one of the proteins that binds to the 5S RNA in the ribosome where it forms part of the central protuberance. The chain is Large ribosomal subunit protein bL25 from Anaeromyxobacter dehalogenans (strain 2CP-C).